Here is a 1482-residue protein sequence, read N- to C-terminus: Cystic fibrosis transmembrane conductance regulator (1482 aa).

The Cytoplasmic portion of the chain corresponds to 1 to 77 (MQRSPLEKAS…KLINALRRCF (77 aa)). A helical transmembrane segment spans residues 78–98 (FWRFMFYGIILYLGEVTKAVQ). An ABC transmembrane type-1 1 domain is found at 81–365 (FMFYGIILYL…WAVQTWYDSL (285 aa)). At 99 to 122 (PLLLGRIIASYDPDNKAERSIAIY) the chain is on the extracellular side. The chain crosses the membrane as a helical span at residues 123-146 (LGVGLCLLFIVRTLLLHPAIFGPH). Residues 147 to 195 (HIGMQMRIAMFSLIYKKTLKLSSRVLDKISIGQLVSLLSNNLNKFDEGL) are Cytoplasmic-facing. A helical membrane pass occupies residues 196 to 216 (ALAHFVWIAPLQVTLLMGLLW). The Extracellular portion of the chain corresponds to 217-222 (ELLQAS). A helical transmembrane segment spans residues 223–243 (AFCGLAFLVVLALFQAGLGKM). At 244 to 298 (MMKYRDQRAGKINERLVITSEMIENIQSVKAYCWEEAMEKMIENLRQTELKLTRK) the chain is on the cytoplasmic side. The chain crosses the membrane as a helical span at residues 299-319 (AAYVRYFNSSAFFFSGLFVVF). At 320–339 (LSVLPYALLKGIMLRKIFTT) the chain is on the extracellular side. Residues 340–358 (ISFCIVLRMAVTRQFPWAV) form a helical membrane-spanning segment. Topologically, residues 359–859 (QTWYDSLGAI…YLRYVTVHKS (501 aa)) are cytoplasmic. Residues Trp401, Ser434, 458–465 (GSTGAGKT), and Gln493 each bind ATP. An ABC transporter 1 domain is found at 423 to 646 (NGDNSLFFSN…RPDFSSKLMG (224 aa)). Cys524 carries S-palmitoyl cysteine lipidation. Residues Ser549 and Ser660 each carry the phosphoserine modification. Residues 654–832 (TAERRNSIIT…EEINEEDLRE (179 aa)) are disordered R region. Ser670 is modified (phosphoserine; by PKA). A Phosphoserine modification is found at Ser686. Residue Lys688 forms a Glycyl lysine isopeptide (Lys-Gly) (interchain with G-Cter in ubiquitin) linkage. Phosphoserine occurs at positions 700 and 712. Residue Thr717 is modified to Phosphothreonine. 5 positions are modified to phosphoserine: Ser737, Ser768, Ser791, Ser796, and Ser814. The helical transmembrane segment at 860–880 (LIFVLIWCLVVFLAEVAACLV) threads the bilayer. One can recognise an ABC transmembrane type-1 2 domain in the interval 860–1156 (LIFVLIWCLV…AVNSSIDVDS (297 aa)). Residues 881–919 (VLCLLKKTSPQDKGNSTKGANNSYAVIITSTSAYYVFYI) are Extracellular-facing. Asn895 and Asn901 each carry an N-linked (GlcNAc...) asparagine glycan. The discontinuously helical transmembrane segment at 920–940 (YVGVADGLLALGLFRGLPLVH) threads the bilayer. Residues 941 to 991 (TLITVSKILHRKMLHSVLQAPMSTLNTLKAGGILNRFSKDIAVLDDLLPLT) are Cytoplasmic-facing. The chain crosses the membrane as a helical span at residues 992-1012 (IFDFIQLLLIVIGAVAVVSVL). Residues 1013 to 1014 (KP) lie on the Extracellular side of the membrane. Residues 1015 to 1035 (YIFLATVPVIVAFILLRAYFL) traverse the membrane as a helical segment. The Cytoplasmic segment spans residues 1036 to 1096 (HTSQQLKQLE…TANWFLYLST (61 aa)). A helical membrane pass occupies residues 1097–1117 (LRWFQMRIEMIFVIFFIAVTF). The Extracellular segment spans residues 1118–1131 (ISILTTGEGEGTVG). The helical transmembrane segment at 1132–1152 (IILTLAMNIMSTLQWAVNSSI) threads the bilayer. Residues 1153–1482 (DVDSLMRSVS…TEEEVQETRL (330 aa)) are Cytoplasmic-facing. Residues 1212–1445 (MTVKDLTAKY…KSLFRQAISP (234 aa)) form the ABC transporter 2 domain. Residues Tyr1221 and 1246-1253 (GRTGSGKS) contribute to the ATP site. An interaction with GORASP2 region spans residues 1388–1482 (RTLKQAFADC…TEEEVQETRL (95 aa)). Residue Cys1397 is the site of S-palmitoyl cysteine attachment. Residues 1454–1464 (HRNSSKQRSRS) show a composition bias toward basic residues. Positions 1454–1482 (HRNSSKQRSRSKIAALKEETEEEVQETRL) are disordered. At Ser1458 the chain carries Phosphoserine. A compositionally biased stretch (acidic residues) spans 1472-1482 (ETEEEVQETRL). The PDZ-binding motif lies at 1480 to 1482 (TRL).

The protein belongs to the ABC transporter superfamily. ABCC family. CFTR transporter (TC 3.A.1.202) subfamily. Monomer; does not require oligomerization for channel activity. May form oligomers in the membrane. Interacts with SLC26A3, SLC26A6 and NHERF1. Interacts with SHANK2. Interacts with MYO6. Interacts (via C-terminus) with GOPC (via PDZ domain); this promotes CFTR internalization and thereby decreases channel activity. Interacts with SLC4A7 through NHERF1. Found in a complex with MYO5B and RAB11A. Interacts with ANO1. Interacts with SLC26A8. Interacts with AHCYL1; the interaction increases CFTR activity. Interacts with CSE1L. The core-glycosylated form interacts with GORASP2 (via PDZ GRASP-type 1 domain) in respone to ER stress. Interacts with MARCHF2; the interaction leads to CFTR ubiqtuitination and degradation. Interacts with ADGRG2. In terms of processing, N-glycosylated. Post-translationally, phosphorylated; cAMP treatment promotes phosphorylation and activates the channel. Dephosphorylation decreases the ATPase activity (in vitro). Phosphorylation at PKA sites activates the channel. Phosphorylation at PKC sites enhances the response to phosphorylation by PKA. Phosphorylated by AMPK; this inhibits channel activity. Ubiquitinated, leading to its degradation in the lysosome. Deubiquitination by USP10 in early endosomes enhances its endocytic recycling to the cell membrane. Ubiquitinated by RNF185 during ER stress. Ubiquitinated by MARCHF2.

It localises to the apical cell membrane. Its subcellular location is the early endosome membrane. The protein resides in the cell membrane. The protein localises to the recycling endosome membrane. It is found in the endoplasmic reticulum membrane. It localises to the nucleus. The catalysed reaction is ATP + H2O + closed Cl(-) channel = ADP + phosphate + open Cl(-) channel.. The enzyme catalyses chloride(in) = chloride(out). It carries out the reaction hydrogencarbonate(in) = hydrogencarbonate(out). It catalyses the reaction ATP + H2O = ADP + phosphate + H(+). In terms of biological role, epithelial ion channel that plays an important role in the regulation of epithelial ion and water transport and fluid homeostasis. Mediates the transport of chloride ions across the cell membrane. Possesses an intrinsic ATPase activity and utilizes ATP to gate its channel; the passive flow of anions through the channel is gated by cycles of ATP binding and hydrolysis by the ATP-binding domains. The ion channel is also permeable to HCO(3)(-); selectivity depends on the extracellular chloride concentration. Exerts its function also by modulating the activity of other ion channels and transporters. Contributes to the regulation of the pH and the ion content of the epithelial fluid layer. Modulates the activity of the epithelial sodium channel (ENaC) complex, in part by regulating the cell surface expression of the ENaC complex. May regulate bicarbonate secretion and salvage in epithelial cells by regulating the transporter SLC4A7. Can inhibit the chloride channel activity of ANO1. Plays a role in the chloride and bicarbonate homeostasis during sperm epididymal maturation and capacitation. This chain is Cystic fibrosis transmembrane conductance regulator, found in Sus scrofa (Pig).